The primary structure comprises 516 residues: Potassium voltage-gated channel subfamily A member 10 (516 aa).

A helical membrane pass occupies residues 223-244; that stretch reads VALVSVLVIVISIIIFCMETLP. A glycan (N-linked (GlcNAc...) asparagine) is linked at N261. A helical transmembrane segment spans residues 276–296; it reads FFVIETACIIWFSFELFVRFI. The helical transmembrane segment at 308 to 328 threads the bilayer; that stretch reads IMNIIDIVSIIPYFVTLTTEL. N-linked (GlcNAc...) asparagine glycosylation is present at N339. A helical; Voltage-sensor membrane pass occupies residues 344 to 363; the sequence is ILRIIRLVRVFRIFKLSRHS. Residues 380-400 traverse the membrane as a helical segment; sequence LGLLIFFLFIGVILFSSAVYF. Residues 426-431 carry the Selectivity filter motif; it reads TVGYGD. A helical membrane pass occupies residues 441-461; that stretch reads IVGTLCAIAGVLTIALPVPVI. An N-linked (GlcNAc...) asparagine glycan is attached at N503.

It belongs to the potassium channel family. A (Shaker) (TC 1.A.1.2) subfamily. Kv1.8/KCNA10 sub-subfamily. As to quaternary structure, homotetramer. As to expression, detected in brain, cochlear sensory epithelium, cochlear ganglion, tegumentum vasculosum. Detected at low levels in cochlear lagena.

The protein resides in the membrane. It catalyses the reaction K(+)(in) = K(+)(out). The channel activity is up-regulated by cAMP. In terms of biological role, voltage-gated potassium ion channel that mediates K(+) permeability of excitable membranes. When opened in response to the voltage difference across the membrane, KCNA10 channel selectively allows the flow of potassium ions across the membrane down their electrochemical gradient. This chain is Potassium voltage-gated channel subfamily A member 10 (KCNA10), found in Gallus gallus (Chicken).